Reading from the N-terminus, the 272-residue chain is Anamorsin homolog (272 aa).

An N-terminal SAM-like domain region spans residues 1-156; sequence MDSMMNQKTV…KIGSSFALKK (156 aa). Positions 157–185 are linker; sequence PVTNLFKIDLDDDVDLIDEDSLLTEEDLM. Residues Cys-195, Cys-202, Cys-205, and Cys-207 each coordinate [2Fe-2S] cluster. The interval 195–207 is fe-S binding site A; that stretch reads CETTKKACKNCVC. Positions 233, 236, 244, and 247 each coordinate [4Fe-4S] cluster. Short sequence motifs (cx2C motif) lie at residues 233 to 236 and 244 to 247; these read CGSC and CGTC. A fe-S binding site B region spans residues 233-247; sequence CGSCGLGDAFRCGTC.

Belongs to the anamorsin family. Monomer. Interacts with ATR3. [2Fe-2S] cluster serves as cofactor. Requires [4Fe-4S] cluster as cofactor.

It localises to the cytoplasm. Its subcellular location is the mitochondrion intermembrane space. In terms of biological role, component of the cytosolic iron-sulfur (Fe-S) protein assembly (CIA) machinery. Required for the maturation of extramitochondrial Fe-S proteins. Part of an electron transfer chain functioning in an early step of cytosolic Fe-S biogenesis, facilitating the de novo assembly of a [4Fe-4S] cluster on the cytosolic Fe-S scaffold complex. Electrons are transferred from NADPH via FAD- and FMN-containing diflavin oxidoreductase TAH18/ATR3. Together with the diflavin oxidoreductase, also required for the assembly of the diferric tyrosyl radical cofactor of ribonucleotide reductase (RNR), probably by providing electrons for reduction during radical cofactor maturation in the catalytic small subunit. Required for embryo development. The chain is Anamorsin homolog from Arabidopsis thaliana (Mouse-ear cress).